Reading from the N-terminus, the 489-residue chain is Inactive receptor-like serine/threonine-protein kinase At2g40270 (489 aa).

Residues 1-23 (MLFKMRSFVAFVLLLSWFGSCCS) form the signal peptide. The Extracellular portion of the chain corresponds to 24–139 (LKDQAVDFLK…PRNSHSSVPL (116 aa)). A disordered region spans residues 67–130 (KDLPSRKDRK…SAPLANSPIP (64 aa)). Low complexity predominate over residues 81-90 (AATTTPSSSP). Residues 99–116 (TKASTVSEPQKRSSTQDV) are compositionally biased toward polar residues. The segment covering 117 to 130 (SPSPSAPLANSPIP) has biased composition (low complexity). The helical transmembrane segment at 140-160 (VVGCVGGAFFLLLVATGLYFF) threads the bilayer. Topologically, residues 161-489 (TSKAGKTVNP…WAELEVLSTA (329 aa)) are cytoplasmic. One can recognise a Protein kinase domain in the interval 200–460 (EDFSNVIGSC…PTMQEVTGWL (261 aa)).

This sequence belongs to the protein kinase superfamily. Ser/Thr protein kinase family.

It localises to the cell membrane. The sequence is that of Inactive receptor-like serine/threonine-protein kinase At2g40270 from Arabidopsis thaliana (Mouse-ear cress).